Consider the following 120-residue polypeptide: Dihydroneopterin triphosphate 2'-epimerase (120 aa).

The protein belongs to the DHNA family. In terms of assembly, homooctamer.

The enzyme catalyses 7,8-dihydroneopterin 3'-triphosphate = 7,8-dihydromonapterin 3'-triphosphate. Functionally, catalyzes the epimerization of carbon 2' of the side chain of 7,8-dihydroneopterin triphosphate (H2NTP) to form 7,8-dihydromonapterin triphosphate (H2MTP). Is required for tetrahydromonapterin biosynthesis. This Escherichia coli O157:H7 protein is Dihydroneopterin triphosphate 2'-epimerase (folX).